The following is a 226-amino-acid chain: MAFRNRMYQLSNVDDADADILNSHFAPNPRGQNHTHGRRRNTLALCTTKDQMFVYGSTPAGGAEWCSEALERSRPRAAFKQQRRRHVPRWISDSFRTCLPKPSGILKEQTVNEEEGNSRHRGKYDCDERIGVAESMNYWHGIVRTEEDGSKTLFLIPESWEDVHLKEGLVAIIDLAVDRLHCSKLVLFVDKNNSSLPYLVKSLHWVGFEPLPHLNCSDHALFGMEL.

This sequence belongs to the ODC antizyme family. Interacts with ODC and thereby sterically blocks ODC homodimerization.

Its function is as follows. Ornithine decarboxylase (ODC) antizyme protein that negatively regulates ODC activity and intracellular polyamine biosynthesis in response to increased intracellular polyamine levels. Binds to ODC monomers, inhibiting the assembly of the functional ODC homodimer, and targets the monomers for ubiquitin-independent proteolytic destruction by the 26S proteasome. This is Ornithine decarboxylase antizyme (spa1) from Schizosaccharomyces pombe (strain 972 / ATCC 24843) (Fission yeast).